The sequence spans 68 residues: Phycobilisome 7.8 kDa linker polypeptide, allophycocyanin-associated, core (68 aa).

The CpcD-like domain maps to 2–57; sequence SRLFKITALVPSLSRTRTQRELQNTYFTKLVPYENWFREQQRIQKAGGKIIKVELA.

This sequence belongs to the phycobilisome linker protein family.

The protein localises to the cellular thylakoid membrane. In terms of biological role, rod linker protein, associated with allophycocyanin. Linker polypeptides determine the state of aggregation and the location of the disk-shaped phycobiliprotein units within the phycobilisome and modulate their spectroscopic properties in order to mediate a directed and optimal energy transfer. In Nostoc sp. (strain PCC 7120 / SAG 25.82 / UTEX 2576), this protein is Phycobilisome 7.8 kDa linker polypeptide, allophycocyanin-associated, core (apcC).